The sequence spans 215 residues: ATP-dependent dethiobiotin synthetase BioD (215 aa).

13–18 (DIGKTV) is an ATP binding site. Thr-17 provides a ligand contact to Mg(2+). Lys-38 is an active-site residue. Residue Thr-42 coordinates substrate. ATP-binding positions include Asp-50, 115 to 118 (EGAG), and 175 to 176 (NH). Residues Asp-50 and Glu-115 each coordinate Mg(2+).

This sequence belongs to the dethiobiotin synthetase family. In terms of assembly, homodimer. Requires Mg(2+) as cofactor.

Its subcellular location is the cytoplasm. The enzyme catalyses (7R,8S)-7,8-diammoniononanoate + CO2 + ATP = (4R,5S)-dethiobiotin + ADP + phosphate + 3 H(+). Its pathway is cofactor biosynthesis; biotin biosynthesis; biotin from 7,8-diaminononanoate: step 1/2. Functionally, catalyzes a mechanistically unusual reaction, the ATP-dependent insertion of CO2 between the N7 and N8 nitrogen atoms of 7,8-diaminopelargonic acid (DAPA, also called 7,8-diammoniononanoate) to form a ureido ring. This is ATP-dependent dethiobiotin synthetase BioD from Neisseria meningitidis serogroup B (strain ATCC BAA-335 / MC58).